The sequence spans 275 residues: Autophagy protein 5 (275 aa).

At methionine 1 the chain carries N-acetylmethionine. Lysine 130 participates in a covalent cross-link: Glycyl lysine isopeptide (Lys-Gly) (interchain with G-Cter in ATG12).

The protein belongs to the ATG5 family. Forms a conjugate with ATG12. Part of the minor complex composed of 4 sets of ATG12-ATG5 and ATG16L1 (400 kDa); this complex interacts with ATG3 leading to disruption of ATG7 interaction and promotion of ATG8-like proteins lipidation. Forms an 800-kDa complex composed of ATG12-ATG5 and ATG16L2. The ATG12-ATG5 conjugate interacts with RAB33A; this interaction is bridged by ATG16L1 and promotes ATG12-ATG5-ATG16L1 complex recruitment to phagophores. Interacts with TECPR1; the interaction is direct and does not take place when ATG16L1 is associated with the ATG5-ATG12 conjugate. Interacts with DHX58/RIG-1, IFIH1/MDA5 and MAVS/IPS-1 in monomeric form as well as in ATG12-ATG5 conjugate form. The interaction with MAVS is further enhanced upon vesicular stomatitis virus (VSV) infection. Interacts with ATG3. Interacts with ATG7 and ATG10. Interacts with FADD. Interacts with Bassoon/BSN; this interaction is important for the regulation of presynaptic autophagy. Interacts with ATG16L2. Conjugated to ATG12; which is essential for autophagy, but is not required for association with isolation membrane. Post-translationally, acetylated by EP300.

It localises to the cytoplasm. The protein localises to the preautophagosomal structure membrane. Involved in autophagic vesicle formation. Conjugation with ATG12, through a ubiquitin-like conjugating system involving ATG7 as an E1-like activating enzyme and ATG10 as an E2-like conjugating enzyme, is essential for its function. The ATG12-ATG5 conjugate acts as an E3-like enzyme which is required for lipidation of ATG8 family proteins and their association to the vesicle membranes. Involved in mitochondrial quality control after oxidative damage, and in subsequent cellular longevity. Plays a critical role in multiple aspects of lymphocyte development and is essential for both B and T lymphocyte survival and proliferation. Required for optimal processing and presentation of antigens for MHC II. Involved in the maintenance of axon morphology and membrane structures, as well as in normal adipocyte differentiation. Promotes primary ciliogenesis through removal of OFD1 from centriolar satellites and degradation of IFT20 via the autophagic pathway. As part of the ATG8 conjugation system with ATG12 and ATG16L1, required for recruitment of LRRK2 to stressed lysosomes and induction of LRRK2 kinase activity in response to lysosomal stress. Functionally, may play an important role in the apoptotic process, possibly within the modified cytoskeleton. Its expression is a relatively late event in the apoptotic process, occurring downstream of caspase activity. Plays a crucial role in IFN-gamma-induced autophagic cell death by interacting with FADD. In Sus scrofa (Pig), this protein is Autophagy protein 5.